The following is a 751-amino-acid chain: Semaphorin-3C (751 aa).

The signal sequence occupies residues 1–21 (MAVLALHAVFGIFIYFSSVKG). A Sema domain is found at 28 to 511 (RVFLTFNELQ…SEEGVTQVPL (484 aa)). An N-linked (GlcNAc...) asparagine glycan is attached at Asn-81. The cysteines at positions 101 and 112 are disulfide-linked. Asn-123 is a glycosylation site (N-linked (GlcNAc...) asparagine). 3 disulfides stabilise this stretch: Cys-130-Cys-139, Cys-266-Cys-378, and Cys-290-Cys-338. Asn-268 carries N-linked (GlcNAc...) asparagine glycosylation. Asn-465 is a glycosylation site (N-linked (GlcNAc...) asparagine). A disulfide bridge connects residues Cys-514 and Cys-532. The Ig-like C2-type domain occupies 571–655 (AYRNAAETVQ…TENNFKQTLA (85 aa)). N-linked (GlcNAc...) asparagine glycosylation is found at Asn-585 and Asn-586. Cys-643 and Cys-709 are disulfide-bonded. Over residues 712 to 731 (SRQQGQRREEPQKMRGDYSK) the composition is skewed to basic and acidic residues. The segment at 712–751 (SRQQGQRREEPQKMRGDYSKLKALINSRKSRNRRNQLPAS) is disordered.

The protein belongs to the semaphorin family. In terms of tissue distribution, collapsin-1, -2, -3, and -5 bind to overlapping but distinct axon tracts.

It localises to the secreted. Its function is as follows. Induces the collapse and paralysis of neuronal growth cones. Could potentially act as repulsive cues toward specific neuronal populations. Binds to neuropilin. The sequence is that of Semaphorin-3C (SEMA3C) from Gallus gallus (Chicken).